A 602-amino-acid chain; its full sequence is Aspartate--tRNA(Asp/Asn) ligase (602 aa).

Glu-175 contacts L-aspartate. Residues 199 to 202 (QIFK) are aspartate. Arg-221 contacts L-aspartate. Residues 221-223 (RDE) and Gln-230 each bind ATP. His-458 provides a ligand contact to L-aspartate. Glu-492 contacts ATP. Arg-499 serves as a coordination point for L-aspartate. 544-547 (GLDR) contributes to the ATP binding site.

The protein belongs to the class-II aminoacyl-tRNA synthetase family. Type 1 subfamily. In terms of assembly, homodimer.

The protein localises to the cytoplasm. It carries out the reaction tRNA(Asx) + L-aspartate + ATP = L-aspartyl-tRNA(Asx) + AMP + diphosphate. In terms of biological role, aspartyl-tRNA synthetase with relaxed tRNA specificity since it is able to aspartylate not only its cognate tRNA(Asp) but also tRNA(Asn). Reaction proceeds in two steps: L-aspartate is first activated by ATP to form Asp-AMP and then transferred to the acceptor end of tRNA(Asp/Asn). In Cupriavidus metallidurans (strain ATCC 43123 / DSM 2839 / NBRC 102507 / CH34) (Ralstonia metallidurans), this protein is Aspartate--tRNA(Asp/Asn) ligase.